Here is a 237-residue protein sequence, read N- to C-terminus: Ribonuclease PH (237 aa).

Residues Arg-86 and 124-126 (GTR) each bind phosphate.

It belongs to the RNase PH family. As to quaternary structure, homohexameric ring arranged as a trimer of dimers.

It carries out the reaction tRNA(n+1) + phosphate = tRNA(n) + a ribonucleoside 5'-diphosphate. Functionally, phosphorolytic 3'-5' exoribonuclease that plays an important role in tRNA 3'-end maturation. Removes nucleotide residues following the 3'-CCA terminus of tRNAs; can also add nucleotides to the ends of RNA molecules by using nucleoside diphosphates as substrates, but this may not be physiologically important. Probably plays a role in initiation of 16S rRNA degradation (leading to ribosome degradation) during starvation. The sequence is that of Ribonuclease PH from Alteromonas mediterranea (strain DSM 17117 / CIP 110805 / LMG 28347 / Deep ecotype).